The chain runs to 123 residues: Late histone H2B.L1 (123 aa).

Low complexity predominate over residues 1–10 (MPAKAQPAGK). Residues 1-33 (MPAKAQPAGKKGSKKAKAPRPSGGKKRRRRRKE) form a disordered region. Residues 11–32 (KGSKKAKAPRPSGGKKRRRRRK) show a composition bias toward basic residues. Ser110 is a glycosylation site (O-linked (GlcNAc) serine). Lys118 is covalently cross-linked (Glycyl lysine isopeptide (Lys-Gly) (interchain with G-Cter in ubiquitin)).

Belongs to the histone H2B family. In terms of assembly, the nucleosome is a histone octamer containing two molecules each of H2A, H2B, H3 and H4 assembled in one H3-H4 heterotetramer and two H2A-H2B heterodimers. The octamer wraps approximately 147 bp of DNA. Post-translationally, monoubiquitination of Lys-118 gives a specific tag for epigenetic transcriptional activation and is also prerequisite for histone H3 'Lys-4' and 'Lys-79' methylation. In terms of processing, glcNAcylation at Ser-110 promotes monoubiquitination of Lys-118. It fluctuates in response to extracellular glucose, and associates with transcribed genes.

It is found in the nucleus. It localises to the chromosome. Its function is as follows. Core component of nucleosome. Nucleosomes wrap and compact DNA into chromatin, limiting DNA accessibility to the cellular machineries which require DNA as a template. Histones thereby play a central role in transcription regulation, DNA repair, DNA replication and chromosomal stability. DNA accessibility is regulated via a complex set of post-translational modifications of histones, also called histone code, and nucleosome remodeling. The sequence is that of Late histone H2B.L1 from Strongylocentrotus purpuratus (Purple sea urchin).